A 721-amino-acid polypeptide reads, in one-letter code: Polyribonucleotide nucleotidyltransferase (721 aa).

The Mg(2+) site is built by Asp-495 and Asp-501. The region spanning 562–621 is the KH domain; the sequence is PRITTIKIRPERIKDIIGPGGKTIKDITARTGTSINIEDDGSVSIASPNQDKVEEAIKMI. Positions 631–699 constitute an S1 motif domain; sequence GRIYLGTVRK…RSGKIRLSRK (69 aa). The tract at residues 699-721 is disordered; that stretch reads KEALADSAKKSEGTEPPKGEPAK.

The protein belongs to the polyribonucleotide nucleotidyltransferase family. Mg(2+) serves as cofactor.

It localises to the cytoplasm. The enzyme catalyses RNA(n+1) + phosphate = RNA(n) + a ribonucleoside 5'-diphosphate. Its function is as follows. Involved in mRNA degradation. Catalyzes the phosphorolysis of single-stranded polyribonucleotides processively in the 3'- to 5'-direction. In Anaeromyxobacter dehalogenans (strain 2CP-1 / ATCC BAA-258), this protein is Polyribonucleotide nucleotidyltransferase.